A 56-amino-acid polypeptide reads, in one-letter code: Large ribosomal subunit protein bL33 (56 aa).

Residues 1 to 12 are compositionally biased toward basic and acidic residues; it reads MATKGGRDKIKL. Positions 1 to 24 are disordered; the sequence is MATKGGRDKIKLESTAGTGHFYTT. Residues 15 to 24 show a composition bias toward polar residues; sequence TAGTGHFYTT.

The protein belongs to the bacterial ribosomal protein bL33 family.

This is Large ribosomal subunit protein bL33 from Paracidovorax citrulli (strain AAC00-1) (Acidovorax citrulli).